The following is a 265-amino-acid chain: Hydroxyethylthiazole kinase (265 aa).

Methionine 36 is a substrate binding site. Residues lysine 112 and serine 160 each contribute to the ATP site. Position 187 (glycine 187) interacts with substrate.

The protein belongs to the Thz kinase family. Mg(2+) serves as cofactor.

It carries out the reaction 5-(2-hydroxyethyl)-4-methylthiazole + ATP = 4-methyl-5-(2-phosphooxyethyl)-thiazole + ADP + H(+). It functions in the pathway cofactor biosynthesis; thiamine diphosphate biosynthesis; 4-methyl-5-(2-phosphoethyl)-thiazole from 5-(2-hydroxyethyl)-4-methylthiazole: step 1/1. Its function is as follows. Catalyzes the phosphorylation of the hydroxyl group of 4-methyl-5-beta-hydroxyethylthiazole (THZ). This is Hydroxyethylthiazole kinase from Clostridium perfringens (strain ATCC 13124 / DSM 756 / JCM 1290 / NCIMB 6125 / NCTC 8237 / Type A).